Here is a 335-residue protein sequence, read N- to C-terminus: Zinc-type alcohol dehydrogenase-like protein SAV2186 (335 aa).

Belongs to the zinc-containing alcohol dehydrogenase family. Quinone oxidoreductase subfamily.

The sequence is that of Zinc-type alcohol dehydrogenase-like protein SAV2186 from Staphylococcus aureus (strain Mu50 / ATCC 700699).